A 177-amino-acid chain; its full sequence is N5-carboxyaminoimidazole ribonucleotide mutase (177 aa).

Substrate is bound by residues serine 18, aspartate 21, and arginine 48.

It belongs to the AIR carboxylase family. Class I subfamily.

It catalyses the reaction 5-carboxyamino-1-(5-phospho-D-ribosyl)imidazole + H(+) = 5-amino-1-(5-phospho-D-ribosyl)imidazole-4-carboxylate. It functions in the pathway purine metabolism; IMP biosynthesis via de novo pathway; 5-amino-1-(5-phospho-D-ribosyl)imidazole-4-carboxylate from 5-amino-1-(5-phospho-D-ribosyl)imidazole (N5-CAIR route): step 2/2. Its function is as follows. Catalyzes the conversion of N5-carboxyaminoimidazole ribonucleotide (N5-CAIR) to 4-carboxy-5-aminoimidazole ribonucleotide (CAIR). This is N5-carboxyaminoimidazole ribonucleotide mutase from Pyrococcus horikoshii (strain ATCC 700860 / DSM 12428 / JCM 9974 / NBRC 100139 / OT-3).